Consider the following 538-residue polypeptide: Importin subunit alpha-4 (538 aa).

The IBB domain maps to 1–58; sequence MSLRPSTRAELRKKIYKTGVDADEARRRREDNLVEIRKNKREDSLLKKRREGMMLQQQ. ARM repeat units follow at residues 112-152, 155-194, 197-237, 239-278, 281-320, 323-363, 366-405, and 409-448; these read SPPI…NVAS, SDHTRVVIEQGAVPIFVKLLTSASDDVREQAVWALGNVAG, PNCR…NFCR, KPPTPFEQVKPALPILRQLIYLNDEEVLTDACWALSYLSD, NDKIQAVIEAGVCPRLVELLGHQSPTVLIPALRTVGNIVT, DSQT…NITA, KLQIEAVVGAGIILPLVHLLQNAEFDIKKEAAWAISNATS, and HEQIQYLVTQGCIKPLCDLLICPDPRIVTVCLEGLENILK.

This sequence belongs to the importin alpha family. Forms a complex with importin subunit beta-1. Interacts with A.tumefaciens VirD2 and VirE2.

The protein localises to the nucleus envelope. In terms of biological role, binds to conventional NLS motifs and mediates nuclear protein import across the nuclear envelope. Acts as a cellular receptor for the nuclear import of the virD2 protein of Agrobacterium and is essential for Agrobacterium-mediated root transformation. The protein is Importin subunit alpha-4 of Arabidopsis thaliana (Mouse-ear cress).